We begin with the raw amino-acid sequence, 138 residues long: Translation initiation factor 2 subunit beta (138 aa).

This sequence belongs to the eIF-2-beta/eIF-5 family. Heterotrimer composed of an alpha, a beta and a gamma chain.

EIF-2 functions in the early steps of protein synthesis by forming a ternary complex with GTP and initiator tRNA. The polypeptide is Translation initiation factor 2 subunit beta (Methanococcus vannielii (strain ATCC 35089 / DSM 1224 / JCM 13029 / OCM 148 / SB)).